A 230-amino-acid polypeptide reads, in one-letter code: Potassium/proton antiporter CemA (230 aa).

4 helical membrane passes run 7 to 27, 106 to 126, 145 to 165, and 181 to 201; these read LPSLLYLVFIVLLPWGVSFSF, IILHFSTNIICLAILSGFFFL, LNDSIKAFFILLVTDFFVGFH, and LGWAPNELIFTIFVCSFPVIL.

The protein belongs to the CemA family.

Its subcellular location is the plastid. It localises to the chloroplast inner membrane. The catalysed reaction is K(+)(in) + H(+)(out) = K(+)(out) + H(+)(in). Functionally, contributes to K(+)/H(+) antiport activity by supporting proton efflux to control proton extrusion and homeostasis in chloroplasts in a light-dependent manner to modulate photosynthesis. Prevents excessive induction of non-photochemical quenching (NPQ) under continuous-light conditions. Indirectly promotes efficient inorganic carbon uptake into chloroplasts. This is Potassium/proton antiporter CemA from Lolium perenne (Perennial ryegrass).